Here is a 198-residue protein sequence, read N- to C-terminus: Glycerol-3-phosphate acyltransferase (198 aa).

Transmembrane regions (helical) follow at residues 5-25, 55-75, 79-99, 114-134, 139-159, and 164-184; these read YLII…SIAI, VGLA…YLGF, GSLG…LPVL, VLLF…LIVV, YVSL…LIYI, and YIGL…RSNI.

Belongs to the PlsY family. Probably interacts with PlsX.

Its subcellular location is the cell membrane. The enzyme catalyses an acyl phosphate + sn-glycerol 3-phosphate = a 1-acyl-sn-glycero-3-phosphate + phosphate. It functions in the pathway lipid metabolism; phospholipid metabolism. In terms of biological role, catalyzes the transfer of an acyl group from acyl-phosphate (acyl-PO(4)) to glycerol-3-phosphate (G3P) to form lysophosphatidic acid (LPA). This enzyme utilizes acyl-phosphate as fatty acyl donor, but not acyl-CoA or acyl-ACP. The chain is Glycerol-3-phosphate acyltransferase from Finegoldia magna (strain ATCC 29328 / DSM 20472 / WAL 2508) (Peptostreptococcus magnus).